Reading from the N-terminus, the 362-residue chain is Phosphoserine aminotransferase (362 aa).

R42 contributes to the L-glutamate binding site. Pyridoxal 5'-phosphate-binding positions include 76-77 (AR), W102, T152, D172, and Q195. K196 is subject to N6-(pyridoxal phosphate)lysine. Position 237 to 238 (237 to 238 (NT)) interacts with pyridoxal 5'-phosphate.

The protein belongs to the class-V pyridoxal-phosphate-dependent aminotransferase family. SerC subfamily. Homodimer. Requires pyridoxal 5'-phosphate as cofactor.

The protein localises to the cytoplasm. It carries out the reaction O-phospho-L-serine + 2-oxoglutarate = 3-phosphooxypyruvate + L-glutamate. The enzyme catalyses 4-(phosphooxy)-L-threonine + 2-oxoglutarate = (R)-3-hydroxy-2-oxo-4-phosphooxybutanoate + L-glutamate. The protein operates within amino-acid biosynthesis; L-serine biosynthesis; L-serine from 3-phospho-D-glycerate: step 2/3. Its pathway is cofactor biosynthesis; pyridoxine 5'-phosphate biosynthesis; pyridoxine 5'-phosphate from D-erythrose 4-phosphate: step 3/5. Functionally, catalyzes the reversible conversion of 3-phosphohydroxypyruvate to phosphoserine and of 3-hydroxy-2-oxo-4-phosphonooxybutanoate to phosphohydroxythreonine. The chain is Phosphoserine aminotransferase from Haemophilus influenzae (strain ATCC 51907 / DSM 11121 / KW20 / Rd).